A 250-amino-acid polypeptide reads, in one-letter code: Carboxymethylproline synthase (250 aa).

Malonyl-CoA is bound at residue 60–64 (AGGDF).

It belongs to the enoyl-CoA hydratase/isomerase family. Homotrimer.

The enzyme catalyses (S)-1-pyrroline-5-carboxylate + malonyl-CoA + H2O + H(+) = (2S,5S)-5-carboxymethylproline + CO2 + CoA. Its pathway is antibiotic biosynthesis; carbapenem biosynthesis. Functionally, catalyzes the formation of (2S,5S)-carboxymethylproline (t-CMP) from malonyl-CoA and (S)-1-pyrroline-5-carboxylate, the first step in the biosynthesis of (5R)-carbapen-2-em-3-carboxylate, a beta-lactam antibiotic of the carbapenem class. Also catalyzes the independent decarboxylation of malonyl-CoA and methylmalonyl-CoA and the hydrolysis of CoA esters such as acetyl-CoA and propionyl-CoA. Catalyzes the reaction with a C2 epimeric mixture of methylmalonyl-CoA to give a 55:45 mixture of (6R)- and (6S)-epimers of 6-methyl-t-CMP, under standard incubation conditions. The chain is Carboxymethylproline synthase from Pectobacterium carotovorum subsp. carotovorum (Erwinia carotovora subsp. carotovora).